The chain runs to 242 residues: Probable transcriptional regulatory protein lp_2253 (242 aa).

Residues 1–21 form a disordered region; sequence MSGHSKWHNIQGRKNAQDAKR.

This sequence belongs to the TACO1 family.

Its subcellular location is the cytoplasm. The sequence is that of Probable transcriptional regulatory protein lp_2253 from Lactiplantibacillus plantarum (strain ATCC BAA-793 / NCIMB 8826 / WCFS1) (Lactobacillus plantarum).